The primary structure comprises 138 residues: Large ribosomal subunit protein uL16 (138 aa).

Basic residues predominate over residues 1 to 13 (MLQPKRRKYRKEQ). Residues 1-24 (MLQPKRRKYRKEQKGRNTGKATRG) are disordered.

The protein belongs to the universal ribosomal protein uL16 family. In terms of assembly, part of the 50S ribosomal subunit.

In terms of biological role, binds 23S rRNA and is also seen to make contacts with the A and possibly P site tRNAs. This is Large ribosomal subunit protein uL16 from Cupriavidus necator (strain ATCC 17699 / DSM 428 / KCTC 22496 / NCIMB 10442 / H16 / Stanier 337) (Ralstonia eutropha).